The sequence spans 278 residues: Undecaprenyl-diphosphatase (278 aa).

8 helical membrane-spanning segments follow: residues 3-23, 42-62, 88-108, 112-132, 152-172, 190-210, 225-245, and 253-273; these read YILI…IPIS, VAYS…IIYF, FLVI…LFVI, ILGL…IIIY, IIIV…RSGI, LSFI…VLFS, GLLI…NALL, and VVVL…LSGI.

Belongs to the UppP family.

It localises to the cell membrane. It carries out the reaction di-trans,octa-cis-undecaprenyl diphosphate + H2O = di-trans,octa-cis-undecaprenyl phosphate + phosphate + H(+). Functionally, catalyzes the dephosphorylation of undecaprenyl diphosphate (UPP). The sequence is that of Undecaprenyl-diphosphatase from Saccharolobus islandicus (strain M.16.4 / Kamchatka #3) (Sulfolobus islandicus).